The sequence spans 225 residues: Cytidylate kinase (225 aa).

12-20 (GPSGAGKGT) serves as a coordination point for ATP.

The protein belongs to the cytidylate kinase family. Type 1 subfamily.

It localises to the cytoplasm. It carries out the reaction CMP + ATP = CDP + ADP. The catalysed reaction is dCMP + ATP = dCDP + ADP. This chain is Cytidylate kinase, found in Pectobacterium carotovorum subsp. carotovorum (strain PC1).